We begin with the raw amino-acid sequence, 342 residues long: tRNA-specific 2-thiouridylase MnmA (342 aa).

ATP is bound by residues 6 to 13 (GMSGGVDS) and Leu-32. Cys-99 (nucleophile) is an active-site residue. Cys-99 and Cys-190 are disulfide-bonded. Gly-124 is an ATP binding site. The tract at residues 140-142 (KDQ) is interaction with tRNA. Cys-190 serves as the catalytic Cysteine persulfide intermediate. An interaction with tRNA region spans residues 292–293 (RY).

It belongs to the MnmA/TRMU family.

Its subcellular location is the cytoplasm. The enzyme catalyses S-sulfanyl-L-cysteinyl-[protein] + uridine(34) in tRNA + AH2 + ATP = 2-thiouridine(34) in tRNA + L-cysteinyl-[protein] + A + AMP + diphosphate + H(+). Functionally, catalyzes the 2-thiolation of uridine at the wobble position (U34) of tRNA, leading to the formation of s(2)U34. The protein is tRNA-specific 2-thiouridylase MnmA of Hydrogenobaculum sp. (strain Y04AAS1).